The chain runs to 224 residues: MSDTPSKGPATGSLTERQRTILEVIRASVNERGYPPSIREIGDAVGLTSTSSVAHQLRTLEQKGFLRRDPNRPRAVDVRGIDDAGTPSATTDVIGSGDLPEPTFVPVLGRIAAGGPILAEEAVEDVFPLPRELVGEGSLFLLKVVGESMVDAAICDGDWVVVRQQNVADNGDIVAAMIDGEATVKTFKRTSGQVWLMPHNPLFEPIPGNDAAILGKVVTVIRKV.

The segment at residues 38–58 is a DNA-binding region (H-T-H motif); that stretch reads IREIGDAVGLTSTSSVAHQLR. Over residues 71-82 the composition is skewed to basic and acidic residues; that stretch reads NRPRAVDVRGID. Residues 71 to 96 form a disordered region; the sequence is NRPRAVDVRGIDDAGTPSATTDVIGS. Catalysis depends on for autocatalytic cleavage activity residues Ser148 and Lys185.

This sequence belongs to the peptidase S24 family. In terms of assembly, homodimer.

It carries out the reaction Hydrolysis of Ala-|-Gly bond in repressor LexA.. Its function is as follows. Represses a number of genes involved in the response to DNA damage (SOS response), including recA and lexA. In the presence of single-stranded DNA, RecA interacts with LexA causing an autocatalytic cleavage which disrupts the DNA-binding part of LexA, leading to derepression of the SOS regulon and eventually DNA repair. This chain is LexA repressor, found in Mycobacteroides abscessus (strain ATCC 19977 / DSM 44196 / CCUG 20993 / CIP 104536 / JCM 13569 / NCTC 13031 / TMC 1543 / L948) (Mycobacterium abscessus).